The primary structure comprises 342 residues: Photosystem II assembly lipoprotein Ycf48 (342 aa).

The signal sequence occupies residues 1-28; that stretch reads MPVKFPSLKFEQLKQLVLVAAIAVFCVS. Cys29 carries the N-palmitoyl cysteine lipid modification. Residue Cys29 is the site of S-diacylglycerol cysteine attachment. The Arg-rich patch motif lies at 196–220; it reads RGNFYSTWAPGQTEWTPHNRNSSRR. Positions 340 to 342 are excised as a propeptide; it reads MVP.

It belongs to the Ycf48 family. Part of early PSII assembly complexes which includes D1 (psbA) and PsbI; not found in mature PSII. By two-hybrid analysis in yeast interacts with precursor and intermediate forms of D1, but less with mature D1. Binds to the lumenal side of PSI and PSII complexes. Coimmunoprecipitates with YidC. Purified chlorophyll- and carotenoid-containing photosystem II (PSII) assembly intermediate complex RCII* (iD1, D1, D2, PsbE, PsbF, PsbI, Ycf39, Ycf48, HliC and HliD). In terms of processing, the last 3 residues are removed in the mature protein.

The protein resides in the cellular thylakoid membrane. A factor required for optimal assembly of photosystem II (PSII) which acts in the early stages of PSII assembly. Also plays a role in replacement of photodamaged D1 (psbA). May interact with precursor D1 to prevent its premature processing before association with D2 (psbD). May also play a role in chlorophyll insertion into chlorophyll-binding proteins. Increasing levels of chlorophyll precursors partially suppresses deletion of this protein, supporting the idea that Ycf48 assists YidC in synthesis of chlorophyll-binding proteins. The Ycf39-Hlip complex binds D1 at an early stage of PSII assembly along with Ycf48, ribosomes and ChlG, the last enzyme in chlorophyll biosynthesis; it may be involved in chlorophyll reuse and delivery to D1 in the initial stages of PSII assembly. The protein is Photosystem II assembly lipoprotein Ycf48 of Synechocystis sp. (strain ATCC 27184 / PCC 6803 / Kazusa).